Here is a 193-residue protein sequence, read N- to C-terminus: Probable GTP-binding protein EngB (193 aa).

Positions 22–193 (ALPEFALAGR…EAWAALERFL (172 aa)) constitute an EngB-type G domain. GTP is bound by residues 30-37 (GRSNVGKS), 57-61 (GKTQT), 75-78 (DVPG), 142-145 (TKAD), and 174-176 (FSA). Mg(2+) is bound by residues serine 37 and threonine 59.

The protein belongs to the TRAFAC class TrmE-Era-EngA-EngB-Septin-like GTPase superfamily. EngB GTPase family. The cofactor is Mg(2+).

Functionally, necessary for normal cell division and for the maintenance of normal septation. This chain is Probable GTP-binding protein EngB, found in Geobacillus sp. (strain WCH70).